The primary structure comprises 243 residues: MIIIPAIDLKNGCCVRLEQGLMEKDTVFNDDPGAQAAEWQRQGGEILHIVDLDGAFAGEPKNRSAIEAIVKSVTIPTQLGGGIRDIATIEAYLSLGIGRVIIGTAAQRNPAFVKEACAKFAGKIVVGIDAKNGMVAVQGWAEVTGITATELARQFEGDGVSAIIYTDISRDGMMQGPNIQATKALAEAINIPVIASGGLSSLQDIENLIAIESSGVTGVITGKAIYSGAINLAEAIALTKKQR.

Aspartate 8 (proton acceptor) is an active-site residue. The active-site Proton donor is the aspartate 129.

This sequence belongs to the HisA/HisF family.

The protein localises to the cytoplasm. It catalyses the reaction 1-(5-phospho-beta-D-ribosyl)-5-[(5-phospho-beta-D-ribosylamino)methylideneamino]imidazole-4-carboxamide = 5-[(5-phospho-1-deoxy-D-ribulos-1-ylimino)methylamino]-1-(5-phospho-beta-D-ribosyl)imidazole-4-carboxamide. The protein operates within amino-acid biosynthesis; L-histidine biosynthesis; L-histidine from 5-phospho-alpha-D-ribose 1-diphosphate: step 4/9. This chain is 1-(5-phosphoribosyl)-5-[(5-phosphoribosylamino)methylideneamino] imidazole-4-carboxamide isomerase, found in Citrifermentans bemidjiense (strain ATCC BAA-1014 / DSM 16622 / JCM 12645 / Bem) (Geobacter bemidjiensis).